A 1076-amino-acid chain; its full sequence is Nickel-cobalt-cadmium resistance protein NccA (1076 aa).

12 consecutive transmembrane segments (helical) span residues W14–L34, V367–G387, A391–N411, L419–E439, T476–V496, P503–V523, M562–V582, L904–G924, T929–L949, V960–I980, P1004–G1024, and V1036–C1056.

The protein belongs to the resistance-nodulation-cell division (RND) (TC 2.A.6) family.

The protein resides in the cell membrane. In terms of biological role, component of the NCC cation-efflux system that confers resistance to nickel, cobalt and cadmium. May form a membrane tunnel, which allows ion transport across the membrane. This chain is Nickel-cobalt-cadmium resistance protein NccA (nccA), found in Alcaligenes xylosoxydans xylosoxydans (Achromobacter xylosoxidans).